Reading from the N-terminus, the 449-residue chain is Phosphoglucosamine mutase (449 aa).

The active-site Phosphoserine intermediate is S100. 4 residues coordinate Mg(2+): S100, D241, D243, and D245. S100 carries the phosphoserine modification.

The protein belongs to the phosphohexose mutase family. Mg(2+) is required as a cofactor. In terms of processing, activated by phosphorylation.

It catalyses the reaction alpha-D-glucosamine 1-phosphate = D-glucosamine 6-phosphate. In terms of biological role, catalyzes the conversion of glucosamine-6-phosphate to glucosamine-1-phosphate. This chain is Phosphoglucosamine mutase, found in Clostridium botulinum (strain Langeland / NCTC 10281 / Type F).